A 273-amino-acid chain; its full sequence is 4-hydroxy-tetrahydrodipicolinate reductase (273 aa).

NAD(+) is bound by residues 12 to 17 (GAGGRM) and glutamate 38. Arginine 39 is an NADP(+) binding site. NAD(+)-binding positions include 102–104 (GTT) and 126–129 (AANF). Histidine 159 serves as the catalytic Proton donor/acceptor. Histidine 160 serves as a coordination point for (S)-2,3,4,5-tetrahydrodipicolinate. Lysine 163 functions as the Proton donor in the catalytic mechanism. A (S)-2,3,4,5-tetrahydrodipicolinate-binding site is contributed by 169–170 (GT).

The protein belongs to the DapB family. Homotetramer.

Its subcellular location is the cytoplasm. The enzyme catalyses (S)-2,3,4,5-tetrahydrodipicolinate + NAD(+) + H2O = (2S,4S)-4-hydroxy-2,3,4,5-tetrahydrodipicolinate + NADH + H(+). It carries out the reaction (S)-2,3,4,5-tetrahydrodipicolinate + NADP(+) + H2O = (2S,4S)-4-hydroxy-2,3,4,5-tetrahydrodipicolinate + NADPH + H(+). It functions in the pathway amino-acid biosynthesis; L-lysine biosynthesis via DAP pathway; (S)-tetrahydrodipicolinate from L-aspartate: step 4/4. Catalyzes the conversion of 4-hydroxy-tetrahydrodipicolinate (HTPA) to tetrahydrodipicolinate. This Yersinia pseudotuberculosis serotype O:1b (strain IP 31758) protein is 4-hydroxy-tetrahydrodipicolinate reductase.